The sequence spans 386 residues: Acetate kinase (386 aa).

Residue Asn9 participates in Mg(2+) binding. Lys16 provides a ligand contact to ATP. Arg74 is a substrate binding site. The active-site Proton donor/acceptor is Asp131. Residues 191-195 (HLGNG), 265-267 (DFR), and 313-317 (GVGEN) each bind ATP. Glu367 contacts Mg(2+).

It belongs to the acetokinase family. As to quaternary structure, homodimer. Mg(2+) serves as cofactor. Mn(2+) is required as a cofactor.

It localises to the cytoplasm. It carries out the reaction acetate + ATP = acetyl phosphate + ADP. It functions in the pathway metabolic intermediate biosynthesis; acetyl-CoA biosynthesis; acetyl-CoA from acetate: step 1/2. Functionally, catalyzes the formation of acetyl phosphate from acetate and ATP. Can also catalyze the reverse reaction. The sequence is that of Acetate kinase from Mycolicibacterium gilvum (strain PYR-GCK) (Mycobacterium gilvum (strain PYR-GCK)).